The chain runs to 268 residues: Indole-3-glycerol phosphate synthase (268 aa).

Belongs to the TrpC family.

It catalyses the reaction 1-(2-carboxyphenylamino)-1-deoxy-D-ribulose 5-phosphate + H(+) = (1S,2R)-1-C-(indol-3-yl)glycerol 3-phosphate + CO2 + H2O. It functions in the pathway amino-acid biosynthesis; L-tryptophan biosynthesis; L-tryptophan from chorismate: step 4/5. This chain is Indole-3-glycerol phosphate synthase, found in Acinetobacter baumannii (strain ACICU).